The chain runs to 242 residues: MTQIGPFDLEKKAAVVAVILEKPLETSKKAAEKGADILEVRLDLLGIRNPESAAKIIREIKSETGLPVLVTNRSVAEGGKWEGKEVDRTELLVALLSLKDGPDAVDIELSASREDRDKVIKAAKAHGKTVIISSHDFSKTPSPQEMTATLAEMFLAEADIAKIAVMPGSMEDVLNLLKVTLEFKNTGKTVCTIAMGKPGKHTRVVAPLYGSVLTYASIESNAVAAPGQLPVDEVKKIMEMLK.

3-dehydroquinate contacts are provided by residues 39–41 and Arg-73; that span reads EVR. Residue His-135 is the Proton donor/acceptor of the active site. Residue Lys-162 is the Schiff-base intermediate with substrate of the active site. 2 residues coordinate 3-dehydroquinate: Arg-203 and Gln-228.

This sequence belongs to the type-I 3-dehydroquinase family. In terms of assembly, homodimer.

The catalysed reaction is 3-dehydroquinate = 3-dehydroshikimate + H2O. It functions in the pathway metabolic intermediate biosynthesis; chorismate biosynthesis; chorismate from D-erythrose 4-phosphate and phosphoenolpyruvate: step 3/7. Functionally, involved in the third step of the chorismate pathway, which leads to the biosynthesis of aromatic amino acids. Catalyzes the cis-dehydration of 3-dehydroquinate (DHQ) and introduces the first double bond of the aromatic ring to yield 3-dehydroshikimate. This chain is 3-dehydroquinate dehydratase, found in Methanosarcina acetivorans (strain ATCC 35395 / DSM 2834 / JCM 12185 / C2A).